The sequence spans 284 residues: Shikimate dehydrogenase (NADP(+)) (284 aa).

Residues 23-25 (SLS) and Thr70 contribute to the shikimate site. Lys74 serves as the catalytic Proton acceptor. Residue Glu86 coordinates NADP(+). The shikimate site is built by Asn95 and Asp111. NADP(+)-binding positions include 135 to 139 (GAGGA), 159 to 164 (NRTPGR), and Ala227. Tyr229 is a binding site for shikimate. NADP(+) is bound at residue Gly251.

Belongs to the shikimate dehydrogenase family. As to quaternary structure, homodimer.

The enzyme catalyses shikimate + NADP(+) = 3-dehydroshikimate + NADPH + H(+). The protein operates within metabolic intermediate biosynthesis; chorismate biosynthesis; chorismate from D-erythrose 4-phosphate and phosphoenolpyruvate: step 4/7. Involved in the biosynthesis of the chorismate, which leads to the biosynthesis of aromatic amino acids. Catalyzes the reversible NADPH linked reduction of 3-dehydroshikimate (DHSA) to yield shikimate (SA). This Rubrobacter xylanophilus (strain DSM 9941 / JCM 11954 / NBRC 16129 / PRD-1) protein is Shikimate dehydrogenase (NADP(+)).